The sequence spans 283 residues: Pantothenate synthetase (283 aa).

30-37 contacts ATP; that stretch reads MGALHEGH. The active-site Proton donor is histidine 37. Glutamine 61 is a (R)-pantoate binding site. Residue glutamine 61 coordinates beta-alanine. 147–150 contributes to the ATP binding site; sequence GEKD. Glutamine 153 serves as a coordination point for (R)-pantoate. Residues isoleucine 176 and 184 to 187 contribute to the ATP site; that span reads VSSR.

It belongs to the pantothenate synthetase family. In terms of assembly, homodimer.

The protein resides in the cytoplasm. It carries out the reaction (R)-pantoate + beta-alanine + ATP = (R)-pantothenate + AMP + diphosphate + H(+). It functions in the pathway cofactor biosynthesis; (R)-pantothenate biosynthesis; (R)-pantothenate from (R)-pantoate and beta-alanine: step 1/1. Functionally, catalyzes the condensation of pantoate with beta-alanine in an ATP-dependent reaction via a pantoyl-adenylate intermediate. This chain is Pantothenate synthetase, found in Pelodictyon phaeoclathratiforme (strain DSM 5477 / BU-1).